A 554-amino-acid chain; its full sequence is Propanediol dehydratase large subunit (554 aa).

This sequence belongs to the diol/glycerol dehydratase large subunit family. As to quaternary structure, the propanediol dehydratase enzyme is a heterotrimeric complex composed of a large (PduC), a medium (PduD) and a small (PduE) subunit. It depends on adenosylcob(III)alamin as a cofactor.

It localises to the bacterial microcompartment. It catalyses the reaction propane-1,2-diol = propanal + H2O. The protein operates within polyol metabolism; 1,2-propanediol degradation. Its activity is regulated as follows. Inhibited by glycerol. In terms of biological role, part of the PduCDE complex that catalyzes the dehydration of 1,2-propanediol (1,2-PD) to propionaldehyde. Required for S.typhimurium growth on 1,2-PD as the sole carbon and energy source. This subunit is directly targeted to the BMC. Functionally, the 1,2-PD-specific bacterial microcompartment (BMC) concentrates low levels of 1,2-PD catabolic enzymes, concentrates volatile reaction intermediates thus enhancing pathway flux and keeps the level of toxic, mutagenic propionaldehyde low. This Salmonella typhimurium (strain LT2 / SGSC1412 / ATCC 700720) protein is Propanediol dehydratase large subunit.